The primary structure comprises 689 residues: DNA-directed RNA polymerase subunit beta' (689 aa).

Cysteine 76, cysteine 78, cysteine 94, and cysteine 97 together coordinate Zn(2+). Mg(2+) is bound by residues aspartate 496, aspartate 498, and aspartate 500.

Belongs to the RNA polymerase beta' chain family. RpoC1 subfamily. In terms of assembly, in plastids the minimal PEP RNA polymerase catalytic core is composed of four subunits: alpha, beta, beta', and beta''. When a (nuclear-encoded) sigma factor is associated with the core the holoenzyme is formed, which can initiate transcription. Mg(2+) serves as cofactor. It depends on Zn(2+) as a cofactor.

The protein resides in the plastid. Its subcellular location is the chloroplast. The catalysed reaction is RNA(n) + a ribonucleoside 5'-triphosphate = RNA(n+1) + diphosphate. Functionally, DNA-dependent RNA polymerase catalyzes the transcription of DNA into RNA using the four ribonucleoside triphosphates as substrates. This chain is DNA-directed RNA polymerase subunit beta', found in Illicium oligandrum (Star anise).